Reading from the N-terminus, the 263-residue chain is Bidirectional sugar transporter SWEET3 (263 aa).

At 1–7 the chain is on the extracellular side; the sequence is MGDKLRL. Residues 8–28 form a helical membrane-spanning segment; that stretch reads SIGILGNGASLLLYTAPIVTF. A MtN3/slv 1 domain is found at 9–97; it reads IGILGNGASL…FIYFYYASPK (89 aa). The Cytoplasmic segment spans residues 29–42; the sequence is SRVFKKKSTEEFSC. A helical transmembrane segment spans residues 43–63; sequence FPYVMTLFNCLIYTWYGLPIV. Topologically, residues 64–71 are extracellular; sequence SHLWENLP. A helical transmembrane segment spans residues 72 to 92; it reads LVTINGVGILLESIFIFIYFY. Residues 93 to 103 are Cytoplasmic-facing; it reads YASPKEKIKVG. Residues 104–124 form a helical membrane-spanning segment; the sequence is VTFVPVIVGFGLTTAISALVF. The Extracellular portion of the chain corresponds to 125–132; sequence DDHRHRKS. Residues 133 to 153 traverse the membrane as a helical segment; it reads FVGSVGLVASISMYGSPLVVM. The region spanning 133–217 is the MtN3/slv 2 domain; the sequence is FVGSVGLVAS…ILYFKYKNKK (85 aa). The Cytoplasmic portion of the chain corresponds to 154-165; that stretch reads KKVIETRSVEYM. Residues 166 to 186 form a helical membrane-spanning segment; the sequence is PFYLSFFSFLASSLWLAYGLL. Over 187 to 190 the chain is Extracellular; the sequence is SHDL. A helical transmembrane segment spans residues 191-211; sequence FLASPNMVATPLGILQLILYF. Residues 212–263 are Cytoplasmic-facing; sequence KYKNKKDLAPTTMVITKRNDHDDKNKATLEFVVDVDRNSDTNEKNSNNASSI.

The protein belongs to the SWEET sugar transporter family. Forms heterooligomers with SWEET11, SWEET13 and SWEET17.

It is found in the cell membrane. Mediates both low-affinity uptake and efflux of sugar across the plasma membrane. The sequence is that of Bidirectional sugar transporter SWEET3 from Arabidopsis thaliana (Mouse-ear cress).